Reading from the N-terminus, the 333-residue chain is 4-hydroxy-2-oxovalerate aldolase (333 aa).

The Pyruvate carboxyltransferase domain maps to 4-254 (VKIFDLTLRD…DCGIDLYKTM (251 aa)). Residue 12-13 (RD) coordinates substrate. D13 serves as a coordination point for Mn(2+). The active-site Proton acceptor is the H16. Residue H193 coordinates substrate. The Mn(2+) site is built by H193 and H195. Y284 contacts substrate.

It belongs to the 4-hydroxy-2-oxovalerate aldolase family.

It carries out the reaction (S)-4-hydroxy-2-oxopentanoate = acetaldehyde + pyruvate. The sequence is that of 4-hydroxy-2-oxovalerate aldolase from Desulfitobacterium hafniense (strain DSM 10664 / DCB-2).